A 121-amino-acid chain; its full sequence is Large ribosomal subunit protein bL19 (121 aa).

It belongs to the bacterial ribosomal protein bL19 family.

This protein is located at the 30S-50S ribosomal subunit interface and may play a role in the structure and function of the aminoacyl-tRNA binding site. This chain is Large ribosomal subunit protein bL19, found in Legionella pneumophila (strain Paris).